The chain runs to 40 residues: U2-ctenitoxin-Pr1a (40 aa).

Intrachain disulfides connect Cys2–Cys17, Cys9–Cys22, Cys16–Cys32, and Cys24–Cys30.

In terms of tissue distribution, expressed by the venom gland.

The protein resides in the secreted. Its function is as follows. Neurotoxin. This is U2-ctenitoxin-Pr1a from Phoneutria reidyi (Brazilian Amazonian armed spider).